We begin with the raw amino-acid sequence, 302 residues long: Glutaminase (302 aa).

Ser61, Asn111, Glu155, Asn162, Tyr186, Tyr238, and Val256 together coordinate substrate.

Belongs to the glutaminase family. Homotetramer.

It carries out the reaction L-glutamine + H2O = L-glutamate + NH4(+). The protein is Glutaminase of Pseudomonas aeruginosa (strain ATCC 15692 / DSM 22644 / CIP 104116 / JCM 14847 / LMG 12228 / 1C / PRS 101 / PAO1).